Reading from the N-terminus, the 461-residue chain is Protein naked cuticle homolog 2 (461 aa).

Residues 1–106 (MGKFQSKHAA…DGEKAASREG (106 aa)) form a disordered region. A lipid anchor (N-myristoyl glycine) is attached at glycine 2. Composition is skewed to basic and acidic residues over residues 34–73 (RGAE…DKGS) and 97–106 (DGEKAASREG). The segment at 121 to 186 (QCDVSVEEDN…LRVKLTVSPE (66 aa)) is interaction with DVL1, DVL2 and DVL3. In terms of domain architecture, EF-hand spans 127-162 (EEDNRQEWTFTLYDFDNSGKVTREDMSSLMHTIYEV). Aspartate 140, aspartate 142, serine 144, lysine 146, and aspartate 151 together coordinate Ca(2+). 5 disordered regions span residues 176-205 (TLRV…PTRG), 263-302 (YTSK…HAIH), 321-359 (TRAL…PGKA), 372-414 (SAQD…GQPT), and 441-461 (HEHH…FHPS). Residues 188 to 205 (SSKKECPLTGQDREPTRG) show a composition bias toward basic and acidic residues. The segment at 307 to 396 (QVLAEHVIPA…PPQPYGHKRY (90 aa)) is interaction with TGFA. Residues 341–350 (PKGPGKPLGT) show a composition bias toward low complexity. A compositionally biased stretch (pro residues) spans 380 to 390 (PQPPPQPPPQP).

This sequence belongs to the NKD family. In terms of assembly, interacts with RNF25, TGFA (via cytoplasmic domain), and PPP2R3A. Interacts with DVL1, DVL2 and DVL3. Ubiquitinated, leading to rapid proteasomal degradation. Interaction with TGFA interferes with RNF25 binding and protects against ubiquitination mediated by RNF25. Expressed in the cecum, colon, esophagus, ileum, jejunum, skin and stomach.

The protein resides in the cell membrane. Its subcellular location is the cytoplasm. It localises to the cytoplasmic vesicle. Functionally, cell autonomous antagonist of the canonical Wnt signaling pathway. May activate a second Wnt signaling pathway that controls planar cell polarity. Required for processing of TGFA and for targeting of TGFA to the basolateral membrane of polarized epithelial cells. In Mus musculus (Mouse), this protein is Protein naked cuticle homolog 2 (Nkd2).